A 468-amino-acid chain; its full sequence is 3-isopropylmalate dehydratase large subunit (468 aa).

[4Fe-4S] cluster-binding residues include C347, C407, and C410.

This sequence belongs to the aconitase/IPM isomerase family. LeuC type 1 subfamily. In terms of assembly, heterodimer of LeuC and LeuD. It depends on [4Fe-4S] cluster as a cofactor.

It carries out the reaction (2R,3S)-3-isopropylmalate = (2S)-2-isopropylmalate. It participates in amino-acid biosynthesis; L-leucine biosynthesis; L-leucine from 3-methyl-2-oxobutanoate: step 2/4. Its function is as follows. Catalyzes the isomerization between 2-isopropylmalate and 3-isopropylmalate, via the formation of 2-isopropylmaleate. The protein is 3-isopropylmalate dehydratase large subunit of Rippkaea orientalis (strain PCC 8801 / RF-1) (Cyanothece sp. (strain PCC 8801)).